The chain runs to 403 residues: Prostaglandin D2 receptor 2 (403 aa).

The Extracellular portion of the chain corresponds to Met-1–Ser-34. Residues Asn-3, Asn-21, and Asn-24 are each glycosylated (N-linked (GlcNAc...) asparagine). A helical transmembrane segment spans residues Val-35–Val-55. Topologically, residues Val-56–His-71 are cytoplasmic. Residues Leu-72–Val-92 traverse the membrane as a helical segment. The Extracellular segment spans residues Gly-93 to Lys-104. A disulfide bond links Cys-103 and Cys-198. Residues Leu-105 to Ser-125 traverse the membrane as a helical segment. Topologically, residues Leu-126–Ala-147 are cytoplasmic. Residues His-148 to Phe-168 form a helical membrane-spanning segment. Topologically, residues Arg-169–Lys-209 are extracellular. The helical transmembrane segment at Phe-210–Leu-230 threads the bilayer. Over Gln-231–Arg-245 the chain is Cytoplasmic. A helical membrane pass occupies residues Leu-246–Leu-266. Residues Leu-267–Gly-284 are Extracellular-facing. The helical transmembrane segment at Leu-285–Leu-305 threads the bilayer. Residues Thr-306–Asp-403 lie on the Cytoplasmic side of the membrane. Residues Asp-329–Leu-332 carry the Involved in the recycling of CRTH2 motif. Ser-330 carries the phosphoserine modification. 2 disordered regions span residues Leu-332–Thr-353 and Pro-384–Asp-403. Residues Lys-338–Ala-348 show a composition bias toward basic residues. Ser-349 bears the Phosphoserine mark. Polar residues predominate over residues Glu-393 to Asp-403.

The protein belongs to the G-protein coupled receptor 1 family. Post-translationally, phosphorylated.

The protein localises to the cell membrane. In terms of biological role, receptor for prostaglandin D2 (PGD2). Coupled to the G(i)-protein. Receptor activation may result in pertussis toxin-sensitive decreases in cAMP levels and Ca(2+) mobilization. PI3K signaling is also implicated in mediating PTGDR2 effects. PGD2 induced receptor internalization. CRTH2 internalization can be regulated by diverse kinases such as, PKC, PKA, GRK2, GPRK5/GRK5 and GRK6. Receptor activation is responsible, at least in part, in immune regulation and allergic/inflammation responses. The sequence is that of Prostaglandin D2 receptor 2 (Ptgdr2) from Rattus norvegicus (Rat).